A 189-amino-acid polypeptide reads, in one-letter code: MDTEYEQVNKPWNELYKETTLGNKLTVNVGMEDQEVPLLPSNFLTKVRVGLSGGYITMRRIRIKIIPLVSRKAGVSGKLYLRDISDTTGRKLHCTESLDLGREIRLTMQHLDFSVSTRSDVPIVFGFEELVSPFLEGRELFSISVRWQFGLSKNCYSLPQSKWKVMYQEDALKVLRPSKKKASKTDSSV.

It belongs to the tombusvirus/aureusvirus movement protein p22 family. As to quaternary structure, interacts with host protein HFI22. Post-translationally, phosphorylated.

It localises to the host membrane. Transports viral genome to neighboring plant cells directly through plasmosdesmata, without any budding. The movement protein allows efficient cell to cell propagation, by bypassing the host cell wall barrier. Displays RNA-binding activity. The polypeptide is Movement protein (Capsicum annuum (Capsicum pepper)).